Reading from the N-terminus, the 172-residue chain is Small ribosomal subunit protein uS5 (172 aa).

An S5 DRBM domain is found at Leu-13–Ile-76.

The protein belongs to the universal ribosomal protein uS5 family. As to quaternary structure, part of the 30S ribosomal subunit. Contacts proteins S4 and S8.

Its function is as follows. With S4 and S12 plays an important role in translational accuracy. In terms of biological role, located at the back of the 30S subunit body where it stabilizes the conformation of the head with respect to the body. This chain is Small ribosomal subunit protein uS5, found in Chromobacterium violaceum (strain ATCC 12472 / DSM 30191 / JCM 1249 / CCUG 213 / NBRC 12614 / NCIMB 9131 / NCTC 9757 / MK).